The primary structure comprises 296 residues: 4-hydroxybenzoate octaprenyltransferase (296 aa).

A run of 8 helical transmembrane segments spans residues 29–49, 52–72, 102–122, 146–166, 169–189, 219–239, 241–261, and 275–295; these read IGVY…GKGA, LQTV…GCVI, ALVL…FTNA, YYPQ…AFTA, GELP…TVGY, VIIL…GARF, LGAC…WEFW, and FLHN…DYAV.

It belongs to the UbiA prenyltransferase family. Requires Mg(2+) as cofactor.

The protein resides in the cell inner membrane. It carries out the reaction all-trans-octaprenyl diphosphate + 4-hydroxybenzoate = 4-hydroxy-3-(all-trans-octaprenyl)benzoate + diphosphate. Its pathway is cofactor biosynthesis; ubiquinone biosynthesis. Its function is as follows. Catalyzes the prenylation of para-hydroxybenzoate (PHB) with an all-trans polyprenyl group. Mediates the second step in the final reaction sequence of ubiquinone-8 (UQ-8) biosynthesis, which is the condensation of the polyisoprenoid side chain with PHB, generating the first membrane-bound Q intermediate 3-octaprenyl-4-hydroxybenzoate. This chain is 4-hydroxybenzoate octaprenyltransferase, found in Pseudomonas syringae pv. syringae (strain B728a).